A 126-amino-acid chain; its full sequence is UPF0538 protein C2orf76 homolog (126 aa).

This sequence belongs to the UPF0538 family.

In Pongo abelii (Sumatran orangutan), this protein is UPF0538 protein C2orf76 homolog.